Reading from the N-terminus, the 486-residue chain is Glutamyl-tRNA(Gln) amidotransferase subunit A (486 aa).

Residues K75 and S150 each act as charge relay system in the active site. The active-site Acyl-ester intermediate is the S174.

The protein belongs to the amidase family. GatA subfamily. Heterotrimer of A, B and C subunits.

It carries out the reaction L-glutamyl-tRNA(Gln) + L-glutamine + ATP + H2O = L-glutaminyl-tRNA(Gln) + L-glutamate + ADP + phosphate + H(+). Its function is as follows. Allows the formation of correctly charged Gln-tRNA(Gln) through the transamidation of misacylated Glu-tRNA(Gln) in organisms which lack glutaminyl-tRNA synthetase. The reaction takes place in the presence of glutamine and ATP through an activated gamma-phospho-Glu-tRNA(Gln). This is Glutamyl-tRNA(Gln) amidotransferase subunit A from Nostoc punctiforme (strain ATCC 29133 / PCC 73102).